A 476-amino-acid polypeptide reads, in one-letter code: Bifunctional protein HldE (476 aa).

The interval 1 to 318 is ribokinase; the sequence is MAQYSAEFKQ…ENAIHARPET (318 aa). 195-198 is a binding site for ATP; that stretch reads NMSE. Residue D264 is part of the active site. The tract at residues 344 to 476 is cytidylyltransferase; the sequence is MTNGCFDILH…VIEKIKLLKD (133 aa).

In the N-terminal section; belongs to the carbohydrate kinase PfkB family. The protein in the C-terminal section; belongs to the cytidylyltransferase family. Homodimer.

The catalysed reaction is D-glycero-beta-D-manno-heptose 7-phosphate + ATP = D-glycero-beta-D-manno-heptose 1,7-bisphosphate + ADP + H(+). The enzyme catalyses D-glycero-beta-D-manno-heptose 1-phosphate + ATP + H(+) = ADP-D-glycero-beta-D-manno-heptose + diphosphate. The protein operates within nucleotide-sugar biosynthesis; ADP-L-glycero-beta-D-manno-heptose biosynthesis; ADP-L-glycero-beta-D-manno-heptose from D-glycero-beta-D-manno-heptose 7-phosphate: step 1/4. It participates in nucleotide-sugar biosynthesis; ADP-L-glycero-beta-D-manno-heptose biosynthesis; ADP-L-glycero-beta-D-manno-heptose from D-glycero-beta-D-manno-heptose 7-phosphate: step 3/4. Functionally, catalyzes the phosphorylation of D-glycero-D-manno-heptose 7-phosphate at the C-1 position to selectively form D-glycero-beta-D-manno-heptose-1,7-bisphosphate. In terms of biological role, catalyzes the ADP transfer from ATP to D-glycero-beta-D-manno-heptose 1-phosphate, yielding ADP-D-glycero-beta-D-manno-heptose. This Haemophilus influenzae (strain PittGG) protein is Bifunctional protein HldE.